A 587-amino-acid chain; its full sequence is Nucleoporin ndc-1 (587 aa).

Topologically, residues 1–79 (MMGENSSAYT…FHSEIDVRKK (79 aa)) are cytoplasmic. The disordered stretch occupies residues 32–55 (ASTSATSSPNLRKSPNRGFSSPRA). The chain crosses the membrane as a helical span at residues 80-100 (LASFVCGAAVALSFIVTVSIL). Residues 101-121 (KLSIWAPFSSVQDSLTWWLYP) are Perinuclear space-facing. A helical transmembrane segment spans residues 122 to 142 (TSWPVTLFIWLSSVAWTFLII). Residues 143-161 (HQFCTVTQVPRIPITDTYA) are Cytoplasmic-facing. A helical transmembrane segment spans residues 162 to 182 (WAGAALEFVHRLIFVYTAFTV). The Perinuclear space portion of the chain corresponds to 183-187 (SESSF). Residues 188 to 208 (FEDFAWIAIAFSVAISSALVI) traverse the membrane as a helical segment. Over 209 to 255 (FRSDFHLNFSNVQVNSFKTLIDFAKSLPYGSLAETSGVDAAIAYTAA) the chain is Cytoplasmic. Residues 256-276 (MALTVFGSPLLWGFSAWWLLI) traverse the membrane as a helical segment. Topologically, residues 277–281 (NIQFH) are perinuclear space. The helical transmembrane segment at 282–302 (LVLFGVCFAQQFFAKIFMKIV) threads the bilayer. Residues 303 to 587 (NQIVMKPMKF…TIKLVCAEEI (285 aa)) are Cytoplasmic-facing.

This sequence belongs to the NDC1 family.

It localises to the nucleus. Its subcellular location is the nuclear pore complex. The protein resides in the nucleus membrane. Component of the nuclear pore complex (NPC), which plays a key role in de novo assembly and insertion of NPC in the nuclear envelope. The chain is Nucleoporin ndc-1 (npp-22) from Caenorhabditis briggsae.